Reading from the N-terminus, the 390-residue chain is NADH-quinone oxidoreductase subunit D (390 aa).

It belongs to the complex I 49 kDa subunit family. In terms of assembly, NDH-1 is composed of 14 different subunits. Subunits NuoB, C, D, E, F, and G constitute the peripheral sector of the complex.

Its subcellular location is the cell inner membrane. It carries out the reaction a quinone + NADH + 5 H(+)(in) = a quinol + NAD(+) + 4 H(+)(out). Its function is as follows. NDH-1 shuttles electrons from NADH, via FMN and iron-sulfur (Fe-S) centers, to quinones in the respiratory chain. The immediate electron acceptor for the enzyme in this species is believed to be ubiquinone. Couples the redox reaction to proton translocation (for every two electrons transferred, four hydrogen ions are translocated across the cytoplasmic membrane), and thus conserves the redox energy in a proton gradient. The polypeptide is NADH-quinone oxidoreductase subunit D (Geobacter metallireducens (strain ATCC 53774 / DSM 7210 / GS-15)).